The primary structure comprises 2241 residues: Large tegument protein deneddylase (2241 aa).

A deubiquitination activity region spans residues methionine 1–serine 238. The Peptidase C76 domain occupies threonine 4–aspartate 226. Residues cysteine 24, aspartate 160, and histidine 162 contribute to the active site. Residues alanine 239–alanine 314 are disordered. Residues aspartate 240–proline 250 are compositionally biased toward low complexity. Positions serine 251–valine 268 are enriched in pro residues. The span at proline 304–alanine 314 shows a compositional bias: low complexity. The interval serine 327–proline 331 is interaction with inner tegument protein. Residues arginine 1170–alanine 1229 are disordered. Residues threonine 1190 to arginine 1199 show a composition bias toward basic and acidic residues.

Belongs to the herpesviridae large tegument protein family. Interacts with host CUL1 and CUL4A; these interactions inhibit the E3 ligase activity of cullins. Interacts with inner tegument protein. Interacts with capsid vertex specific component CVC2. Interacts with the major capsid protein/MCP.

Its subcellular location is the virion tegument. It localises to the host cytoplasm. The protein localises to the host nucleus. It carries out the reaction Thiol-dependent hydrolysis of ester, thioester, amide, peptide and isopeptide bonds formed by the C-terminal Gly of ubiquitin (a 76-residue protein attached to proteins as an intracellular targeting signal).. Large tegument protein that plays multiple roles in the viral cycle. During viral entry, remains associated with the capsid while most of the tegument is detached and participates in the capsid transport toward the host nucleus. Plays a role in the routing of the capsid at the nuclear pore complex and subsequent uncoating. Within the host nucleus, acts as a deneddylase and promotes the degradation of nuclear CRLs (cullin-RING ubiquitin ligases) and thereby stabilizes nuclear CRL substrates, while cytoplasmic CRLs remain unaffected. These modifications prevent host cell cycle S-phase progression and create a favorable environment allowing efficient viral genome replication. Participates later in the secondary envelopment of capsids. Indeed, plays a linker role for the association of the outer viral tegument to the capsids together with the inner tegument protein. The chain is Large tegument protein deneddylase (UL48) from Human cytomegalovirus (strain AD169) (HHV-5).